We begin with the raw amino-acid sequence, 471 residues long: Dynein regulatory complex subunit 4 (471 aa).

The tract at residues 1–24 (MAPKKKGTKKESKKDAVATGDIEG) is disordered. Coiled coils occupy residues 23–239 (EGAS…YNDI) and 282–425 (LSRA…DVAK).

It belongs to the DRC4 family. Component of the nexin-dynein regulatory complex (N-DRC). Interacts with DRC1, DRC2 and DRC5.

It is found in the cytoplasm. It localises to the cytoskeleton. The protein localises to the flagellum axoneme. The protein resides in the flagellum basal body. Functionally, component of the nexin-dynein regulatory complex (N-DRC), a key regulator of ciliary/flagellar motility which maintains the alignment and integrity of the distal axoneme and regulates microtubule sliding in motile axonemes. Plays an important role in the assembly of the N-DRC linker. This chain is Dynein regulatory complex subunit 4, found in Chlamydomonas reinhardtii (Chlamydomonas smithii).